Here is a 197-residue protein sequence, read N- to C-terminus: Peptide deformylase (197 aa).

Residues C106 and H148 each contribute to the Fe cation site. E149 is an active-site residue. H152 provides a ligand contact to Fe cation.

It belongs to the polypeptide deformylase family. Fe(2+) is required as a cofactor.

It catalyses the reaction N-terminal N-formyl-L-methionyl-[peptide] + H2O = N-terminal L-methionyl-[peptide] + formate. Functionally, removes the formyl group from the N-terminal Met of newly synthesized proteins. Requires at least a dipeptide for an efficient rate of reaction. N-terminal L-methionine is a prerequisite for activity but the enzyme has broad specificity at other positions. This chain is Peptide deformylase, found in Mycobacterium ulcerans (strain Agy99).